The primary structure comprises 415 residues: 3-isopropylmalate dehydratase large subunit (415 aa).

[4Fe-4S] cluster contacts are provided by Cys295, Cys353, and Cys356.

This sequence belongs to the aconitase/IPM isomerase family. LeuC type 2 subfamily. In terms of assembly, heterodimer of LeuC and LeuD. [4Fe-4S] cluster is required as a cofactor.

It carries out the reaction (2R,3S)-3-isopropylmalate = (2S)-2-isopropylmalate. It functions in the pathway amino-acid biosynthesis; L-leucine biosynthesis; L-leucine from 3-methyl-2-oxobutanoate: step 2/4. Its function is as follows. Catalyzes the isomerization between 2-isopropylmalate and 3-isopropylmalate, via the formation of 2-isopropylmaleate. The sequence is that of 3-isopropylmalate dehydratase large subunit from Pyrobaculum arsenaticum (strain DSM 13514 / JCM 11321 / PZ6).